The chain runs to 301 residues: UDP-N-acetylenolpyruvoylglucosamine reductase (301 aa).

Positions Val30–Gly194 constitute an FAD-binding PCMH-type domain. Arg173 is a catalytic residue. Catalysis depends on Ser223, which acts as the Proton donor. Glu293 is a catalytic residue.

This sequence belongs to the MurB family. FAD is required as a cofactor.

It is found in the cytoplasm. The enzyme catalyses UDP-N-acetyl-alpha-D-muramate + NADP(+) = UDP-N-acetyl-3-O-(1-carboxyvinyl)-alpha-D-glucosamine + NADPH + H(+). It functions in the pathway cell wall biogenesis; peptidoglycan biosynthesis. Cell wall formation. This is UDP-N-acetylenolpyruvoylglucosamine reductase from Streptococcus pneumoniae (strain 70585).